The chain runs to 426 residues: Casein kinase I (426 aa).

The Protein kinase domain maps to Tyr9–Val278. Residues Ile15–Ile23 and Lys38 contribute to the ATP site. The Proton acceptor role is filled by Asp128. Disordered stretches follow at residues Thr340–Asn360 and Pro377–Lys426. Residues Ser345–Asn360 are compositionally biased toward polar residues. The segment covering Gln386–Thr404 has biased composition (low complexity). Polar residues predominate over residues Pro414 to Lys426.

The protein belongs to the protein kinase superfamily. CK1 Ser/Thr protein kinase family. Casein kinase I subfamily. Monomer. Autophosphorylated.

It is found in the cytoplasm. It localises to the nucleus. It catalyses the reaction L-seryl-[protein] + ATP = O-phospho-L-seryl-[protein] + ADP + H(+). The enzyme catalyses L-threonyl-[protein] + ATP = O-phospho-L-threonyl-[protein] + ADP + H(+). Casein kinases are operationally defined by their preferential utilization of acidic proteins such as caseins as substrates. Can phosphorylate a large number of proteins. May have a role in DNA repair mechanism and support vegetative growth of the cells. The polypeptide is Casein kinase I (cak1-1) (Dictyostelium discoideum (Social amoeba)).